A 517-amino-acid polypeptide reads, in one-letter code: Maturase K (517 aa).

Belongs to the intron maturase 2 family. MatK subfamily.

The protein localises to the plastid. The protein resides in the chloroplast. Functionally, usually encoded in the trnK tRNA gene intron. Probably assists in splicing its own and other chloroplast group II introns. The sequence is that of Maturase K from Paris tetraphylla.